The following is a 477-amino-acid chain: MSAARFAARSFLSRRLAATVPAAAPAASTPAASTCPAAQQQQSQFHSSAHLEARRRSRFKNVRAVEMGLTSDAKIESFTKKKFAEYTEDEKAALAHNYPAEHMEAIEAAEAAIDPKDLTIQGRLRVDPYRMPYIDDFSEIQPIIDKRARRSAPPSHKARFMDVDEFTQDLINWADEIRRGEPTHRMKKLRDFVPEEFFEKPEGQWPKDVRDEAFTKFWAYLKEQKDADAKAAANATGPTDGDILSYILERSSMTDNNLQANSSLAPALPDKVPGVEGKYRNAIDPADDGLDDKGQYQELKKRTGMSVRQILQLKTKKLVHRRVVNQTRLGKIASDSVMVIAGNGDGWLGLGMAKSVEASIAVEKATLLAIQNMQPIPRYENRTIYGEVTTKVSGTIVRLNSRPPGFGLRVSHRIFEMCRAAGIRDLSAKFLRSRNPMNTVKATYQALLSQPNPEDLAIGRGKKLVDVRKVYYGGSVY.

The protein belongs to the universal ribosomal protein uS5 family. In terms of assembly, component of the mitochondrial small ribosomal subunit (mt-SSU). Mature N.crassa 74S mitochondrial ribosomes consist of a small (37S) and a large (54S) subunit. The 37S small subunit contains a 16S ribosomal RNA (16S mt-rRNA) and 32 different proteins. The 54S large subunit contains a 23S rRNA (23S mt-rRNA) and 42 different proteins. uS3m, uS4m and uS5m form the narrow entry site of the mRNA channel.

It is found in the mitochondrion. Its function is as follows. Component of the mitochondrial ribosome (mitoribosome), a dedicated translation machinery responsible for the synthesis of mitochondrial genome-encoded proteins, including at least some of the essential transmembrane subunits of the mitochondrial respiratory chain. The mitoribosomes are attached to the mitochondrial inner membrane and translation products are cotranslationally integrated into the membrane. This is Small ribosomal subunit protein uS5m (mrps5) from Neurospora crassa (strain ATCC 24698 / 74-OR23-1A / CBS 708.71 / DSM 1257 / FGSC 987).